The following is a 450-amino-acid chain: Class E vacuolar protein-sorting machinery protein HSE1 (450 aa).

Residues 15 to 145 (ATDGKLRSDN…RIRRKWPGLL (131 aa)) enclose the VHS domain. 3 disordered regions span residues 141-167 (WPGL…EDQE), 179-212 (FEKS…QTTS), and 374-450 (PNTQ…PPNY). Positions 147 to 167 (EPEKPSKQKVSHQEATDEDQE) are enriched in basic and acidic residues. A UIM domain is found at 163–182 (DEDQELQRALKMSLEEFEKS). Over residues 184–196 (QQSNGSAVQSNSL) the composition is skewed to polar residues. The span at 197 to 209 (QDHNQGQQQPQQQ) shows a compositional bias: low complexity. One can recognise an SH3 domain in the interval 212–271 (SGIRRVRALYDLNANEQDELSFRKGDVIVVLEQVYRDWWRGSLHGKIGIFPLNYVTPITE). Residues 394-432 (NNTYQTTNGQYTQHNITPQQQYQVPSQNYQSQPPSMQSN) show a composition bias toward low complexity.

The protein belongs to the STAM family. In terms of assembly, component of the ESCRT-0 complex composed of HSE1 and VPS27.

It localises to the endosome membrane. Its function is as follows. Component of the ESCRT-0 complex which is the sorting receptor for ubiquitinated cargo proteins at the multivesicular body (MVB). This is Class E vacuolar protein-sorting machinery protein HSE1 (HSE1) from Candida glabrata (strain ATCC 2001 / BCRC 20586 / JCM 3761 / NBRC 0622 / NRRL Y-65 / CBS 138) (Yeast).